Reading from the N-terminus, the 207-residue chain is Small ribosomal subunit protein uS4 (207 aa).

Residues 31 to 56 (KCKLDSKPGQHGRTSGARTSDYGNQL) form a disordered region. The segment covering 42 to 53 (GRTSGARTSDYG) has biased composition (polar residues). Positions 97-157 (ARLDNVVYRM…EKSKKQVRIV (61 aa)) constitute an S4 RNA-binding domain.

It belongs to the universal ribosomal protein uS4 family. In terms of assembly, part of the 30S ribosomal subunit. Contacts protein S5. The interaction surface between S4 and S5 is involved in control of translational fidelity.

In terms of biological role, one of the primary rRNA binding proteins, it binds directly to 16S rRNA where it nucleates assembly of the body of the 30S subunit. Its function is as follows. With S5 and S12 plays an important role in translational accuracy. This is Small ribosomal subunit protein uS4 from Janthinobacterium sp. (strain Marseille) (Minibacterium massiliensis).